Reading from the N-terminus, the 1669-residue chain is Formin-like protein 12 (1669 aa).

The Phosphatase tensin-type domain occupies 5 to 193 (RRLFYRKPPD…QYICKMDDEL (189 aa)). Catalysis depends on Cys-126, which acts as the Phosphocysteine intermediate. In terms of domain architecture, C2 tensin-type spans 199 to 338 (PIPFTLDCVI…FKAEVLFSEF (140 aa)). 3 disordered regions span residues 688–709 (QGSS…DANE), 1025–1240 (DAGP…GHGL), and 1631–1669 (IEAD…SPFK). The span at 1036–1050 (LEWKRCPHHPPERPH) shows a compositional bias: basic and acidic residues. Pro residues-rich tracts occupy residues 1060–1069 (PSPPSPPPPQ), 1098–1127 (APPP…PPPI), 1136–1190 (PPAP…PPPR), and 1198–1230 (PPTP…PAPP). The 400-residue stretch at 1247 to 1646 (NSAATARRST…KAQKEAEKEA (400 aa)) folds into the FH2 domain.

Belongs to the formin-like family. Class-II subfamily.

This chain is Formin-like protein 12 (FH12), found in Oryza sativa subsp. japonica (Rice).